The sequence spans 347 residues: tRNA N6-adenosine threonylcarbamoyltransferase (347 aa).

Positions 111 and 115 each coordinate Fe cation. Substrate is bound by residues 133 to 137, Asp166, Gly179, and Asn278; that span reads LASGG. Asp306 is a Fe cation binding site.

Belongs to the KAE1 / TsaD family. It depends on Fe(2+) as a cofactor.

Its subcellular location is the cytoplasm. The catalysed reaction is L-threonylcarbamoyladenylate + adenosine(37) in tRNA = N(6)-L-threonylcarbamoyladenosine(37) in tRNA + AMP + H(+). Required for the formation of a threonylcarbamoyl group on adenosine at position 37 (t(6)A37) in tRNAs that read codons beginning with adenine. Is involved in the transfer of the threonylcarbamoyl moiety of threonylcarbamoyl-AMP (TC-AMP) to the N6 group of A37, together with TsaE and TsaB. TsaD likely plays a direct catalytic role in this reaction. The sequence is that of tRNA N6-adenosine threonylcarbamoyltransferase from Paramagnetospirillum magneticum (strain ATCC 700264 / AMB-1) (Magnetospirillum magneticum).